The chain runs to 140 residues: ATP synthase epsilon chain (140 aa).

The protein belongs to the ATPase epsilon chain family. In terms of assembly, F-type ATPases have 2 components, CF(1) - the catalytic core - and CF(0) - the membrane proton channel. CF(1) has five subunits: alpha(3), beta(3), gamma(1), delta(1), epsilon(1). CF(0) has three main subunits: a, b and c.

The protein localises to the cell inner membrane. Produces ATP from ADP in the presence of a proton gradient across the membrane. This chain is ATP synthase epsilon chain, found in Janthinobacterium sp. (strain Marseille) (Minibacterium massiliensis).